Consider the following 601-residue polypeptide: ATP-dependent lipid A-core flippase (601 aa).

4 helical membrane passes run 26–46, 82–102, 167–187, and 263–283; these read VGLF…QPML, LMIV…NYFL, VFLF…MVAI, and VYTP…LFLV. Residues 30–321 enclose the ABC transmembrane type-1 domain; sequence AVSILGYVIF…LSEVSSTIQR (292 aa). In terms of domain architecture, ABC transporter spans 353–589; that stretch reads IEVRDLSFRY…GGHYARLHAM (237 aa). An ATP-binding site is contributed by 387-394; sequence GRSGSGKS.

The protein belongs to the ABC transporter superfamily. Lipid exporter (TC 3.A.1.106) family. Homodimer.

The protein localises to the cell inner membrane. It carries out the reaction ATP + H2O + lipid A-core oligosaccharideSide 1 = ADP + phosphate + lipid A-core oligosaccharideSide 2.. Functionally, involved in lipopolysaccharide (LPS) biosynthesis. Translocates lipid A-core from the inner to the outer leaflet of the inner membrane. Transmembrane domains (TMD) form a pore in the inner membrane and the ATP-binding domain (NBD) is responsible for energy generation. The polypeptide is ATP-dependent lipid A-core flippase (Aromatoleum aromaticum (strain DSM 19018 / LMG 30748 / EbN1) (Azoarcus sp. (strain EbN1))).